The chain runs to 552 residues: MSKIADDQYFNDEEEDFAKLLEKEETLEKGTIKEGLIVSINENDGYAMVSVGGKTEGRLALNEITDEKGQLMYQKNDPIVVHVSEKGEHPSVSYKKAISQQKIQAKIEELGENYENAIIEGKIVGKNKGGYIVESQGVEYFLSRSHSSLKNDANHIGKRIKACIIRVDKENHSINISRKRFFEVNDKRQLEISKELLEATEPVLGVVRQITPFGIFVKFKGIDGLVHYSEISHKGPVNPEKYYKEGDEVYVKAIAYDEEKRRLSLSIKATIEDPWEEIQDKLKPGYAIKVVVSNIEHYGVFVDIGNDIEGFLHVSEISWDKNVSHPSHYLSVGQEIDVKIIDIDPKNRRLRVSLKQLTNRPFDVFESKHQVGDIVEGKVATLTDFGAFLNLGGVDGLLHNHDAFWDKDKKCKDHYKIGDVIKVKILKINKKDKKISLSAKHLVTSPTEEFAQKHKTDSVIQGKVVSIKDFGVFIHADGIDVLIKNEDLNPLKKDEIKIGQEITCVVVAIEKSNNKVRASVHRLERKKEKEELQAFNTSDDKMTLGDILKEKL.

6 S1 motif domains span residues 31–101 (TIKE…ISQQ), 116–179 (NAII…ISRK), 200–268 (TEPV…LSIK), 285–355 (GYAI…VSLK), 372–440 (GDIV…LSAK), and 457–521 (DSVI…ASVH).

It belongs to the bacterial ribosomal protein bS1 family.

Binds mRNA; thus facilitating recognition of the initiation point. It is needed to translate mRNA with a short Shine-Dalgarno (SD) purine-rich sequence. This Helicobacter pylori (strain J99 / ATCC 700824) (Campylobacter pylori J99) protein is Small ribosomal subunit protein bS1 (rpsA).